Here is a 167-residue protein sequence, read N- to C-terminus: Peptidoglycan L-alanyl-D-glutamate endopeptidase CwlK (167 aa).

An N-terminal signal peptide occupies residues 1-26 (MNLPAKTFVILCILFLLDLCFSYIRH).

The protein belongs to the peptidase M15C family.

It is found in the cell membrane. In terms of biological role, cleaves the linkage of the L-alanine-D-glutamic acid of B.subtilis cell wall. The chain is Peptidoglycan L-alanyl-D-glutamate endopeptidase CwlK (cwlK) from Bacillus subtilis (strain 168).